Reading from the N-terminus, the 225-residue chain is Small ribosomal subunit protein L51-b (225 aa).

The transit peptide at 1–84 (MKFPDLLRCS…QCAFISSDRF (84 aa)) directs the protein to the mitochondrion.

Belongs to the bacterial ribosomal protein bS1 family. Component of the mitochondrial small ribosomal subunit (mt-SSU). Mature yeast 74S mitochondrial ribosomes consist of a small (37S) and a large (54S) subunit. The 37S small subunit contains a 15S ribosomal RNA (15S mt-rRNA) and at least 32 different proteins. The 54S large subunit contains a 21S rRNA (21S mt-rRNA) and at least 45 different proteins. This subunit is mutually exclusive with mrp51/small ribosomal subunit protein bS1m.

It is found in the mitochondrion. In terms of biological role, component of the mitochondrial ribosome (mitoribosome), a dedicated translation machinery responsible for the synthesis of mitochondrial genome-encoded proteins, including at least some of the essential transmembrane subunits of the mitochondrial respiratory chain. The mitoribosomes are attached to the mitochondrial inner membrane and translation products are cotranslationally integrated into the membrane. Functionally interacts with the 5'-UTR of mitochondrial mRNAs. Specifically plays a role in the translation of cob1/cytochrome b and cox3. Has a role in meiosis. The sequence is that of Small ribosomal subunit protein L51-b from Schizosaccharomyces pombe (strain 972 / ATCC 24843) (Fission yeast).